The primary structure comprises 316 residues: Ribose-phosphate pyrophosphokinase (316 aa).

ATP is bound by residues 37–39 (DGE) and 96–97 (RQ). Mg(2+) is bound by residues histidine 130 and aspartate 171. Lysine 194 is a catalytic residue. Arginine 196 and aspartate 221 together coordinate D-ribose 5-phosphate.

Belongs to the ribose-phosphate pyrophosphokinase family. Class I subfamily. Homohexamer. It depends on Mg(2+) as a cofactor.

It localises to the cytoplasm. The catalysed reaction is D-ribose 5-phosphate + ATP = 5-phospho-alpha-D-ribose 1-diphosphate + AMP + H(+). It functions in the pathway metabolic intermediate biosynthesis; 5-phospho-alpha-D-ribose 1-diphosphate biosynthesis; 5-phospho-alpha-D-ribose 1-diphosphate from D-ribose 5-phosphate (route I): step 1/1. Involved in the biosynthesis of the central metabolite phospho-alpha-D-ribosyl-1-pyrophosphate (PRPP) via the transfer of pyrophosphoryl group from ATP to 1-hydroxyl of ribose-5-phosphate (Rib-5-P). This chain is Ribose-phosphate pyrophosphokinase, found in Rhodopirellula baltica (strain DSM 10527 / NCIMB 13988 / SH1).